The chain runs to 100 residues: Mitochondrial import inner membrane translocase subunit Tim10 B (100 aa).

Residues cysteine 25–cysteine 49 carry the Twin CX3C motif motif. 2 cysteine pairs are disulfide-bonded: cysteine 25–cysteine 49 and cysteine 29–cysteine 45.

Belongs to the small Tim family. Component of the TIM22 complex, which core is composed of TIMM22, associated with TIMM10 (TIMM10A and/or TIMM10B), TIMM9, AGK and TIMM29.

The protein localises to the mitochondrion inner membrane. Its function is as follows. Component of the TIM22 complex, a complex that mediates the import and insertion of multi-pass transmembrane proteins into the mitochondrial inner membrane. The TIM22 complex forms a twin-pore translocase that uses the membrane potential as the external driving force. In the TIM22 complex, it may act as a docking point for the soluble 70 kDa complex that guides the target proteins in transit through the aqueous mitochondrial intermembrane space. This Rattus norvegicus (Rat) protein is Mitochondrial import inner membrane translocase subunit Tim10 B (Timm10b).